The sequence spans 637 residues: Dihydrolipoyllysine-residue acetyltransferase component of pyruvate dehydrogenase complex, mitochondrial (637 aa).

Residues 1–85 constitute a mitochondrion transit peptide; that stretch reads MWRVCVRRAQ…LLGSPGRRSY (85 aa). The interval 80-100 is disordered; that stretch reads PGRRSYSLPPHQKVPLPSLSP. A Lipoyl-binding 1 domain is found at 90–166; that stretch reads HQKVPLPSLS…PIGSIICITV (77 aa). Serine 99 bears the Phosphoserine mark. An N6-lipoyllysine modification is found at lysine 131. Disordered stretches follow at residues 189–219 and 307–340; these read QAAA…PPHM and LKPQ…PAGP. Positions 201–211 are enriched in low complexity; that stretch reads AAPTAPSAKAP. Residues 218 to 287 form the Lipoyl-binding 2 domain; it reads HMQVSAVGEQ…PLGAPLCIIV (70 aa). Pro residues predominate over residues 310–321; that stretch reads QAPPPVPPPVAA. Low complexity predominate over residues 322–333; that stretch reads APPTAQPLAPTP. The Peripheral subunit-binding (PSBD) domain occupies 345 to 382; sequence FVSPLAKKLAAERGIDLTQVKGTGPEGRIIKKDIDSFV. Arginine 451 is a CoA binding site. N6-acetyllysine is present on lysine 456. Lysine 463 bears the N6-succinyllysine mark. Serine 465 lines the CoA pocket. Position 537 is an N6-succinyllysine (lysine 537). Positions 556, 557, and 581 each coordinate CoA. Residues histidine 610 and aspartate 614 contribute to the active site.

It belongs to the 2-oxoacid dehydrogenase family. As to quaternary structure, part of the pyruvate dehydrogenase complex (PDHc) that is a multi-enzyme complex composed of multiple copies of three enzymes, pyruvate dehydrogenase (subunits PDH1A and PDHB, E1 component), dihydrolipoamide acetyltransferase (DLAT, E2 component), and dihydrolipoamide dehydrogenase (DLD, E3 component) to which is added an additional protein the E3-binding protein (PDHX, E3BP). In terms of structural architecture, the E2 and E3BP components assemble into a 60meric central core with icosahedral symmetry. The central core is decorated with E1 and E3 proteins. Currently, two alternative models for the E2:E3BP stoichiometry are considered as being either 48:12 (E2(48)-E3BP(12)) or 40:20 (E2(40)-E3BP(20)). Interacts with PDK2 and PDK3. Interacts with SIRT4. Interacts with PDHB. (R)-lipoate is required as a cofactor. In terms of processing, delipoylated at Lys-131 by SIRT4, delipoylation decreases the PHD complex activity. As to expression, detected at higher levels in cauda epididymal spermatazoa than in caput epididymal spermatazoa (at protein level).

Its subcellular location is the mitochondrion matrix. It catalyses the reaction N(6)-[(R)-dihydrolipoyl]-L-lysyl-[protein] + acetyl-CoA = N(6)-[(R)-S(8)-acetyldihydrolipoyl]-L-lysyl-[protein] + CoA. Its function is as follows. As part of the pyruvate dehydrogenase complex, catalyzes the transfers of an acetyl group to a lipoic acid moiety. The pyruvate dehydrogenase complex, catalyzes the overall conversion of pyruvate to acetyl-CoA and CO(2), and thereby links cytoplasmic glycolysis and the mitochondrial tricarboxylic acid (TCA) cycle. The polypeptide is Dihydrolipoyllysine-residue acetyltransferase component of pyruvate dehydrogenase complex, mitochondrial (Mesocricetus auratus (Golden hamster)).